The sequence spans 598 residues: MSQAYQPDSTKTSAKTPVAPTVATLNPPKRKTLMRLLAYLKPYWWAILLTIIGFAINAATEIWIAKLLQYITDAINQNDQSKQDLFPFIIVMLFFVRGVGSFLGNYYTALVSRNLVYELRVEVFNKLLRLPSSFYLANPAGTISSKLIFDVEQVTAASTDSMKTLLRDGLTVVALMGFLLYSNWRLTLILFVVLPPILWLIRVASKRYLKLSKGIQETMGDVSHITNEVINGYQVVKNYGGQVYESKRFDVTSKKNLRQGMKVVVTNSINTPAVQLLMAMAMAVVVWLALRPAVIDDISAGQFISYIAAAGLLSKPVRSLTDVNQQLQRGLAAGESIFALLDEPEEADTGVLSPTLAGEIKLDNVSLVYPDSTVALHDFNLDIRAGETVALVGRSGAGKSSLVNLLTRTLTTSSGQITLDGMPIEDIKLESLRAQIAMVNQQVVLFNTTVFNNIAYGSLAHKTPAEVEQAAKDAFAHDFIMQMPNGYQSEIGAEGLQLSGGQRQRLSIARALLKDAPILILDEATSALDNESEYYIQKALDNIMKNRTTLVIAHRLTTIESADRIAVLDGGQIVELGTHTQLMQLHGHYAQMYARDFE.

The segment covering 1–15 (MSQAYQPDSTKTSAK) has biased composition (polar residues). The tract at residues 1–21 (MSQAYQPDSTKTSAKTPVAPT) is disordered. The next 4 helical transmembrane spans lie at 44-64 (WWAILLTIIGFAINAATEIWI), 85-105 (LFPFIIVMLFFVRGVGSFLGN), 172-192 (VVALMGFLLYSNWRLTLILFV), and 269-289 (INTPAVQLLMAMAMAVVVWLA). The ABC transmembrane type-1 domain maps to 48–329 (LLTIIGFAIN…LTDVNQQLQR (282 aa)). Residues 360-595 (IKLDNVSLVY…HGHYAQMYAR (236 aa)) form the ABC transporter domain. 393 to 400 (GRSGAGKS) serves as a coordination point for ATP.

This sequence belongs to the ABC transporter superfamily. Lipid exporter (TC 3.A.1.106) family. Homodimer.

Its subcellular location is the cell inner membrane. The catalysed reaction is ATP + H2O + lipid A-core oligosaccharideSide 1 = ADP + phosphate + lipid A-core oligosaccharideSide 2.. In terms of biological role, involved in lipopolysaccharide (LPS) biosynthesis. Translocates lipid A-core from the inner to the outer leaflet of the inner membrane. Transmembrane domains (TMD) form a pore in the inner membrane and the ATP-binding domain (NBD) is responsible for energy generation. In Psychrobacter cryohalolentis (strain ATCC BAA-1226 / DSM 17306 / VKM B-2378 / K5), this protein is ATP-dependent lipid A-core flippase.